A 96-amino-acid polypeptide reads, in one-letter code: Large ribosomal subunit protein uL23 (96 aa).

This sequence belongs to the universal ribosomal protein uL23 family. In terms of assembly, part of the 50S ribosomal subunit. Contacts protein L29, and trigger factor when it is bound to the ribosome.

One of the early assembly proteins it binds 23S rRNA. One of the proteins that surrounds the polypeptide exit tunnel on the outside of the ribosome. Forms the main docking site for trigger factor binding to the ribosome. This chain is Large ribosomal subunit protein uL23, found in Halalkalibacterium halodurans (strain ATCC BAA-125 / DSM 18197 / FERM 7344 / JCM 9153 / C-125) (Bacillus halodurans).